Here is a 297-residue protein sequence, read N- to C-terminus: tRNA (guanine-N(7)-)-methyltransferase (297 aa).

The S-adenosyl-L-methionine site is built by E22, E47, D74, and D97. D97 is an active-site residue. Residues K101, D133, and 165 to 168 (TKYE) each bind substrate.

It belongs to the class I-like SAM-binding methyltransferase superfamily. TrmB family.

The enzyme catalyses guanosine(46) in tRNA + S-adenosyl-L-methionine = N(7)-methylguanosine(46) in tRNA + S-adenosyl-L-homocysteine. Its pathway is tRNA modification; N(7)-methylguanine-tRNA biosynthesis. In terms of biological role, catalyzes the formation of N(7)-methylguanine at position 46 (m7G46) in tRNA. The chain is tRNA (guanine-N(7)-)-methyltransferase from Aquifex aeolicus (strain VF5).